The following is a 188-amino-acid chain: Shikimate kinase (188 aa).

Gly21–Thr26 is an ATP binding site. Thr25 lines the Mg(2+) pocket. Positions 43, 67, and 90 each coordinate substrate. Position 130 (Arg130) interacts with ATP. Position 148 (Arg148) interacts with substrate.

It belongs to the shikimate kinase family. Monomer. Mg(2+) is required as a cofactor.

Its subcellular location is the cytoplasm. It carries out the reaction shikimate + ATP = 3-phosphoshikimate + ADP + H(+). The protein operates within metabolic intermediate biosynthesis; chorismate biosynthesis; chorismate from D-erythrose 4-phosphate and phosphoenolpyruvate: step 5/7. Catalyzes the specific phosphorylation of the 3-hydroxyl group of shikimic acid using ATP as a cosubstrate. This chain is Shikimate kinase, found in Geobacillus kaustophilus (strain HTA426).